We begin with the raw amino-acid sequence, 142 residues long: Clock-controlled protein 6 (142 aa).

This sequence belongs to the SED1 family.

This chain is Clock-controlled protein 6 (ccg-6), found in Neurospora crassa (strain ATCC 24698 / 74-OR23-1A / CBS 708.71 / DSM 1257 / FGSC 987).